The sequence spans 381 residues: Na(+)/H(+) antiporter NhaA 1 (381 aa).

A run of 11 helical transmembrane segments spans residues 18–38 (GLLL…SYSA), 53–73 (ITHW…GLEL), 89–109 (SLPI…FLAL), 118–138 (GAGI…SLLG), 147–167 (VFLT…IAVF), 170–190 (TSIG…LFVL), 210–230 (YFML…AFVI), 251–271 (PVAF…AIES), 283–303 (FGII…FSSI), 321–341 (ILGA…ITLL), and 348–368 (IIVF…ITGF).

This sequence belongs to the NhaA Na(+)/H(+) (TC 2.A.33) antiporter family.

It localises to the cell inner membrane. The enzyme catalyses Na(+)(in) + 2 H(+)(out) = Na(+)(out) + 2 H(+)(in). Its function is as follows. Na(+)/H(+) antiporter that extrudes sodium in exchange for external protons. This is Na(+)/H(+) antiporter NhaA 1 from Flavobacterium johnsoniae (strain ATCC 17061 / DSM 2064 / JCM 8514 / BCRC 14874 / CCUG 350202 / NBRC 14942 / NCIMB 11054 / UW101) (Cytophaga johnsonae).